A 147-amino-acid polypeptide reads, in one-letter code: Small ribosomal subunit protein uS9 (147 aa).

Belongs to the universal ribosomal protein uS9 family.

The protein is Small ribosomal subunit protein uS9 (rps16) of Dictyostelium discoideum (Social amoeba).